The following is a 265-amino-acid chain: SEYASELAQADNNVLAPAPLTFGGRGDIRTSKAVKSISESTVVSNYDEDNFRSCCALFGEAQLKCFQMHYSPNAPSSQMESEGSANPSTIGSVSEGYVSESQGQESERSESEGSEGEDSEETEGAEEPHEQMESEGGDQEESEGAEQPQEQMESEGQEPESEEDVDSGEITDGSDMNMPGPGSSDGGVPLGLTEVDEQTSDGEEPEEPEEPGGEQGPHEQMESEGEGNESEEEEVEEPQEVIESEGQQSESEDPEKEEEEEERSG.

The Cell attachment site signature appears at 25-27 (RGD). Positions 71–265 (SPNAPSSQME…KEEEEEERSG (195 aa)) are disordered. Polar residues predominate over residues 73-92 (NAPSSQMESEGSANPSTIGS). 4 repeat units span residues 75–94 (PSSQ…GSVS), 105–124 (ESER…ETEG), 128–147 (PHEQ…GAEQ), and 148–167 (PQEQ…DVDS). Positions 75–257 (PSSQMESEGS…QSESEDPEKE (183 aa)) are 6 X approximate repeats. Acidic residues-rich tracts occupy residues 112–125 (EGSE…TEGA), 133–144 (ESEGGDQEESEG), 152–169 (MESE…DSGE), 194–212 (EVDE…EEPG), 222–243 (ESEG…EVIE), and 250–265 (ESED…ERSG). 2 consecutive repeat copies span residues 217–236 (PHEQ…EEVE) and 238–257 (PQEV…PEKE). The N-linked (GlcNAc...) asparagine glycan is linked to asparagine 228.

In terms of tissue distribution, first expressed in the vegetal plate and progressively the expression becomes restricted to a subset of endodermal cells as development proceeds.

Its function is as follows. May be an adhesion molecule involved in gastrulation of the sea urchin embryo. In Strongylocentrotus purpuratus (Purple sea urchin), this protein is Protein ENDO16 (ENDO16).